Reading from the N-terminus, the 54-residue chain is Large ribosomal subunit protein bL33A (54 aa).

It belongs to the bacterial ribosomal protein bL33 family.

The chain is Large ribosomal subunit protein bL33A from Mycobacteroides abscessus (strain ATCC 19977 / DSM 44196 / CCUG 20993 / CIP 104536 / JCM 13569 / NCTC 13031 / TMC 1543 / L948) (Mycobacterium abscessus).